The chain runs to 380 residues: Lipid-A-disaccharide synthase (380 aa).

This sequence belongs to the LpxB family.

It carries out the reaction a lipid X + a UDP-2-N,3-O-bis[(3R)-3-hydroxyacyl]-alpha-D-glucosamine = a lipid A disaccharide + UDP + H(+). Its pathway is bacterial outer membrane biogenesis; LPS lipid A biosynthesis. Condensation of UDP-2,3-diacylglucosamine and 2,3-diacylglucosamine-1-phosphate to form lipid A disaccharide, a precursor of lipid A, a phosphorylated glycolipid that anchors the lipopolysaccharide to the outer membrane of the cell. The polypeptide is Lipid-A-disaccharide synthase (Rickettsia typhi (strain ATCC VR-144 / Wilmington)).